A 325-amino-acid polypeptide reads, in one-letter code: Nod factor export ATP-binding protein I (325 aa).

An ABC transporter domain is found at 27–257 (LELRKVRKQY…QIGCDVVEVY (231 aa)). An ATP-binding site is contributed by 59–66 (GPNGAGKT).

Belongs to the ABC transporter superfamily. Lipooligosaccharide exporter (TC 3.A.1.102) family. The complex is composed of two ATP-binding proteins (NodI) and two transmembrane proteins (NodJ).

It localises to the cell inner membrane. Functionally, part of the ABC transporter complex NodIJ involved in the export of the nodulation factors (Nod factors), the bacterial signal molecules that induce symbiosis and subsequent nodulation induction. Nod factors are LCO (lipo-chitin oligosaccharide), a modified beta-1,4-linked N-acetylglucosamine oligosaccharide. This subunit is responsible for energy coupling to the transport system. This Cupriavidus pinatubonensis (strain JMP 134 / LMG 1197) (Cupriavidus necator (strain JMP 134)) protein is Nod factor export ATP-binding protein I.